The primary structure comprises 468 residues: Glutamate--tRNA ligase 2 (468 aa).

A 'HIGH' region motif is present at residues 9–19; it reads PSPTGSLHLGG. A 'KMSKS' region motif is present at residues 238–242; that stretch reads KLSKR. Lys241 serves as a coordination point for ATP.

This sequence belongs to the class-I aminoacyl-tRNA synthetase family. Glutamate--tRNA ligase type 1 subfamily. In terms of assembly, monomer.

It is found in the cytoplasm. The catalysed reaction is tRNA(Glu) + L-glutamate + ATP = L-glutamyl-tRNA(Glu) + AMP + diphosphate. In terms of biological role, catalyzes the attachment of glutamate to tRNA(Glu) in a two-step reaction: glutamate is first activated by ATP to form Glu-AMP and then transferred to the acceptor end of tRNA(Glu). The sequence is that of Glutamate--tRNA ligase 2 from Anaplasma phagocytophilum (strain HZ).